Reading from the N-terminus, the 149-residue chain is Calmodulin-3 (149 aa).

At alanine 2 the chain carries N-acetylalanine. 4 consecutive EF-hand domains span residues 8-43 (DQIA…LGQN), 44-79 (PTEA…KMKD), 81-116 (DSEE…LGEK), and 117-149 (LTDE…MMAK). Residues aspartate 21, aspartate 23, aspartate 25, cysteine 27, glutamate 32, aspartate 57, aspartate 59, asparagine 61, threonine 63, glutamate 68, aspartate 94, aspartate 96, asparagine 98, and glutamate 105 each coordinate Ca(2+). Residue lysine 116 is modified to N6,N6,N6-trimethyllysine. Positions 130, 132, 134, 136, and 141 each coordinate Ca(2+).

This sequence belongs to the calmodulin family.

Functionally, calmodulin mediates the control of a large number of enzymes, ion channels and other proteins by Ca(2+). Among the enzymes to be stimulated by the calmodulin-Ca(2+) complex are a number of protein kinases and phosphatases. The protein is Calmodulin-3 (CAM3) of Oryza sativa subsp. indica (Rice).